Reading from the N-terminus, the 164-residue chain is Kunitz-type serine protease inhibitor BbKI (164 aa).

This sequence belongs to the protease inhibitor I3 (leguminous Kunitz-type inhibitor) family. As to quaternary structure, monomer.

The protein resides in the secreted. Inhibits bovine trypsin, human plasma kallikrein and plasmin and weakly bovine chymotrypsin. The sequence is that of Kunitz-type serine protease inhibitor BbKI from Bauhinia bauhinioides (Perlebia bauhinoides).